The chain runs to 594 residues: Shugoshin (594 aa).

Positions K38 to S61 form a coiled coil. Disordered stretches follow at residues S104 to R178, Q201 to N266, S342 to R380, and T519 to Q549. Residues E220–N240 are a coiled coil. A compositionally biased stretch (basic and acidic residues) spans Q224–E239. Positions S252–S261 are enriched in polar residues. Over residues K343 to L355 the composition is skewed to basic residues. Over residues G357–E376 the composition is skewed to basic and acidic residues. Polar residues-rich tracts occupy residues T519–N532 and N539–Q549.

Belongs to the shugoshin family.

The protein resides in the nucleus. Its subcellular location is the chromosome. It is found in the centromere. Its function is as follows. Plays a central role in chromosome cohesion during cell division by preventing premature dissociation of cohesin complex from centromeres after prophase, when most of cohesin complex dissociates from chromosomes arms. The sequence is that of Shugoshin (SGO1) from Kluyveromyces lactis (strain ATCC 8585 / CBS 2359 / DSM 70799 / NBRC 1267 / NRRL Y-1140 / WM37) (Yeast).